Consider the following 571-residue polypeptide: Proline--tRNA ligase (571 aa).

Belongs to the class-II aminoacyl-tRNA synthetase family. ProS type 1 subfamily. Homodimer.

It is found in the cytoplasm. It catalyses the reaction tRNA(Pro) + L-proline + ATP = L-prolyl-tRNA(Pro) + AMP + diphosphate. Its function is as follows. Catalyzes the attachment of proline to tRNA(Pro) in a two-step reaction: proline is first activated by ATP to form Pro-AMP and then transferred to the acceptor end of tRNA(Pro). As ProRS can inadvertently accommodate and process non-cognate amino acids such as alanine and cysteine, to avoid such errors it has two additional distinct editing activities against alanine. One activity is designated as 'pretransfer' editing and involves the tRNA(Pro)-independent hydrolysis of activated Ala-AMP. The other activity is designated 'posttransfer' editing and involves deacylation of mischarged Ala-tRNA(Pro). The misacylated Cys-tRNA(Pro) is not edited by ProRS. The sequence is that of Proline--tRNA ligase from Vibrio vulnificus (strain YJ016).